The sequence spans 76 residues: Dolichyl-diphosphooligosaccharide--protein glycosyltransferase subunit OST5 (76 aa).

Helical transmembrane passes span 14–34 and 54–74; these read FYPVCAFLFCVIGFAFFATFI and ALIASMSLGLGLFFVLLAGGI.

Belongs to the OST5 family. As to quaternary structure, component of the oligosaccharyltransferase (OST) complex.

Its subcellular location is the membrane. In terms of biological role, subunit of the oligosaccharyl transferase (OST) complex that catalyzes the initial transfer of a defined glycan (Glc(3)Man(9)GlcNAc(2) in eukaryotes) from the lipid carrier dolichol-pyrophosphate to an asparagine residue within an Asn-X-Ser/Thr consensus motif in nascent polypeptide chains, the first step in protein N-glycosylation. N-glycosylation occurs cotranslationally and the complex associates with the Sec61 complex at the channel-forming translocon complex that mediates protein translocation across the endoplasmic reticulum (ER). All subunits are required for a maximal enzyme activity. The sequence is that of Dolichyl-diphosphooligosaccharide--protein glycosyltransferase subunit OST5 from Dictyostelium discoideum (Social amoeba).